The chain runs to 317 residues: Regulator of microtubule dynamics protein 1 (317 aa).

Lys168 is modified (N6-succinyllysine). 2 TPR repeats span residues 171–207 (AICI…NPKD) and 225–261 (PWYQ…DPNF).

The protein belongs to the RMDN family. In terms of assembly, interacts with microtubules.

It is found in the cytoplasm. Its subcellular location is the cytoskeleton. The protein resides in the spindle. It localises to the spindle pole. This chain is Regulator of microtubule dynamics protein 1 (RMDN1), found in Bos taurus (Bovine).